A 560-amino-acid chain; its full sequence is Dihydroxy-acid dehydratase (560 aa).

Asp80 lines the Mg(2+) pocket. Residue Cys121 coordinates [2Fe-2S] cluster. Positions 122 and 123 each coordinate Mg(2+). Residue Lys123 is modified to N6-carboxylysine. Cys194 contacts [2Fe-2S] cluster. Mg(2+) is bound at residue Glu447. Ser473 serves as the catalytic Proton acceptor.

This sequence belongs to the IlvD/Edd family. As to quaternary structure, homodimer. The cofactor is [2Fe-2S] cluster. Mg(2+) is required as a cofactor.

It catalyses the reaction (2R)-2,3-dihydroxy-3-methylbutanoate = 3-methyl-2-oxobutanoate + H2O. It carries out the reaction (2R,3R)-2,3-dihydroxy-3-methylpentanoate = (S)-3-methyl-2-oxopentanoate + H2O. It functions in the pathway amino-acid biosynthesis; L-isoleucine biosynthesis; L-isoleucine from 2-oxobutanoate: step 3/4. It participates in amino-acid biosynthesis; L-valine biosynthesis; L-valine from pyruvate: step 3/4. In terms of biological role, functions in the biosynthesis of branched-chain amino acids. Catalyzes the dehydration of (2R,3R)-2,3-dihydroxy-3-methylpentanoate (2,3-dihydroxy-3-methylvalerate) into 2-oxo-3-methylpentanoate (2-oxo-3-methylvalerate) and of (2R)-2,3-dihydroxy-3-methylbutanoate (2,3-dihydroxyisovalerate) into 2-oxo-3-methylbutanoate (2-oxoisovalerate), the penultimate precursor to L-isoleucine and L-valine, respectively. The sequence is that of Dihydroxy-acid dehydratase from Chlorobaculum parvum (strain DSM 263 / NCIMB 8327) (Chlorobium vibrioforme subsp. thiosulfatophilum).